We begin with the raw amino-acid sequence, 181 residues long: Ribose 1,5-bisphosphate phosphokinase PhnN (181 aa).

12–19 (GPSGAGKD) provides a ligand contact to ATP.

Belongs to the ribose 1,5-bisphosphokinase family.

The enzyme catalyses alpha-D-ribose 1,5-bisphosphate + ATP = 5-phospho-alpha-D-ribose 1-diphosphate + ADP. It participates in metabolic intermediate biosynthesis; 5-phospho-alpha-D-ribose 1-diphosphate biosynthesis; 5-phospho-alpha-D-ribose 1-diphosphate from D-ribose 5-phosphate (route II): step 3/3. In terms of biological role, catalyzes the phosphorylation of ribose 1,5-bisphosphate to 5-phospho-D-ribosyl alpha-1-diphosphate (PRPP). This chain is Ribose 1,5-bisphosphate phosphokinase PhnN, found in Acidiphilium cryptum (strain JF-5).